A 312-amino-acid polypeptide reads, in one-letter code: Light-independent protochlorophyllide reductase iron-sulfur ATP-binding protein (312 aa).

Residues 55 to 60 (GIGKST) and Lys84 contribute to the ATP site. Mg(2+) is bound at residue Ser59. [4Fe-4S] cluster contacts are provided by Cys140 and Cys174. ATP contacts are provided by residues 225–226 (NR) and 249–251 (PDL).

Belongs to the NifH/BchL/ChlL family. Homodimer. Protochlorophyllide reductase is composed of three subunits; BchL, BchN and BchB. Requires [4Fe-4S] cluster as cofactor.

The enzyme catalyses chlorophyllide a + oxidized 2[4Fe-4S]-[ferredoxin] + 2 ADP + 2 phosphate = protochlorophyllide a + reduced 2[4Fe-4S]-[ferredoxin] + 2 ATP + 2 H2O. It functions in the pathway porphyrin-containing compound metabolism; bacteriochlorophyll biosynthesis (light-independent). Functionally, component of the dark-operative protochlorophyllide reductase (DPOR) that uses Mg-ATP and reduced ferredoxin to reduce ring D of protochlorophyllide (Pchlide) to form chlorophyllide a (Chlide). This reaction is light-independent. The L component serves as a unique electron donor to the NB-component of the complex, and binds Mg-ATP. The protein is Light-independent protochlorophyllide reductase iron-sulfur ATP-binding protein of Rhodopseudomonas palustris (strain BisB18).